We begin with the raw amino-acid sequence, 316 residues long: MGGKAQNGEDEARGKVLSSLPPSLVPYAELMRVHRPLGYYLNTSPYVVGVVFGAAVAPTKLPATILLDRLLILVLWSLFLRSAGCVWNDVIDMDLDRQIARTRLRPLPRGAVSSWNAVMLTAGIFACGGSLLSFLPRECAIEALIEIFFALLYPFGKRFTDFPQLILVNIGWAIPMSMHSLGLDPLAYKKPTFFMFLFIALVIVMIDVVYSRQDTEEDMKVGVKSMAVRFKHSIELLSYAFFYASTGALLAAGYYSGLGIPFTVLSVGGHFGGFLYFLKTTGVGKAPQVESYAKLACLIASLFWVVGLFVEYYLRV.

9 helical membrane-spanning segments follow: residues 47–67 (VVGV…TILL), 71–91 (LILV…NDVI), 115–135 (WNAV…LSFL), 139–159 (CAIE…GKRF), 162–182 (FPQL…HSLG), 191–211 (PTFF…VVYS), 234–254 (IELL…AAGY), 258–278 (LGIP…LYFL), and 294–314 (KLAC…EYYL).

It belongs to the UbiA prenyltransferase family.

The protein resides in the membrane. It catalyses the reaction 3,5-dimethylorsellinate + (2E,6E)-farnesyl diphosphate = (3R)-3-farnesyl-6-hydroxy-2,3,5-trimethyl-4-oxocyclohexa-1,5-diene-1-carboxylate + diphosphate + H(+). It functions in the pathway secondary metabolite biosynthesis; terpenoid biosynthesis. Functionally, DMOA farnesyltransferase; part of the gene cluster that mediates the biosynthesis of novofumigatonin, a heavily oxygenated meroterpenoid containing a unique orthoester moiety. The first step of the pathway is the synthesis of 3,5-dimethylorsellinic acid (DMOA) by the polyketide synthase nvfA via condensation of one acetyl-CoA starter unit with 3 malonyl-CoA units and 2 methylations. DMOA is then converted to farnesyl-DMOA by the farnesyltransferase nvfB. Epoxydation by FAD-dependent monooxygenase nvfK, followed by a protonation-initiated cyclization catalyzed by the terpene cyclase nvfL leads to the production of asnavolin H. The short chain dehydrogenase nvfC then as a 3-OH dehydrogenase of asnovolin H to yield chemesin D. There are two branches to synthesize asnovolin A from chemesin D. In one branch, chemesin D undergoes Baeyer-Villiger oxidation by nvfH, methylation by nvfJ, and enoyl reduction by the nvfM D enoylreductase that reduces the double bond between C-5'and C-6', to form respectively asnovolin I, asnovolin K, and asnovolin A. In the other branch, the methylation precedes the Baeyer-Villiger oxidation and the enoyl reduction to yield asnovolin A via the asnovolin J intermediate. Asnovolin A is further converted to fumigatonoid A by the Fe(II)/2-oxoglutarate-dependent dioxygenase nvfI that catalyzes an endoperoxidation reaction. The alpha/beta hydrolase nvfD then acts as an epimerase that converts fumigatonoid A to its C-5' epimer, which then undergoes spontaneous or nvfD-catalyzed lactonization. The following step utilizes the ketoreductase nvfG to produce fumigatonoid B. The dioxygenase nvfE further converts fumigatonoid B into fumigatonoid C. Finally the Fe(II)/2-oxoglutarate-dependent dioxygenase nvfF catalyzes two rounds of oxidation to transform fumigatonoid C into the end product, novofumigatonin A. The sequence is that of DMOA farnesyltransferase nvfB from Aspergillus novofumigatus (strain IBT 16806).